The sequence spans 496 residues: Glutamate--tRNA ligase (496 aa).

Residues 10-20 carry the 'HIGH' region motif; it reads PSPTGPLHIGG. The short motif at 251–255 is the 'KMSKS' region element; it reads KMSKR. K254 contacts ATP.

This sequence belongs to the class-I aminoacyl-tRNA synthetase family. Glutamate--tRNA ligase type 1 subfamily. Monomer.

The protein resides in the cytoplasm. It catalyses the reaction tRNA(Glu) + L-glutamate + ATP = L-glutamyl-tRNA(Glu) + AMP + diphosphate. Functionally, catalyzes the attachment of glutamate to tRNA(Glu) in a two-step reaction: glutamate is first activated by ATP to form Glu-AMP and then transferred to the acceptor end of tRNA(Glu). This Heliobacterium modesticaldum (strain ATCC 51547 / Ice1) protein is Glutamate--tRNA ligase.